A 284-amino-acid polypeptide reads, in one-letter code: RNA polymerase sigma factor RpoH (284 aa).

A sigma-70 factor domain-2 region spans residues 53 to 122; sequence LILSHLRFVI…IHEYVLRNWR (70 aa). Residues 77-80 carry the Interaction with polymerase core subunit RpoC motif; that stretch reads DLIQ. Positions 228–280 are sigma-70 factor domain-4; it reads ALLRLDERSRHIIHARWLDKNKKNTLQNIANNYGISAERVRQLEKNAMKKLKL. Positions 253–272 form a DNA-binding region, H-T-H motif; it reads LQNIANNYGISAERVRQLEK.

This sequence belongs to the sigma-70 factor family. RpoH subfamily. In terms of assembly, interacts with the RNA polymerase core enzyme.

It localises to the cytoplasm. In terms of biological role, sigma factors are initiation factors that promote the attachment of RNA polymerase to specific initiation sites and are then released. This sigma factor is involved in regulation of expression of heat shock genes. The sequence is that of RNA polymerase sigma factor RpoH from Buchnera aphidicola subsp. Acyrthosiphon pisum (strain APS) (Acyrthosiphon pisum symbiotic bacterium).